The sequence spans 576 residues: Protein O-linked-mannose beta-1,4-N-acetylglucosaminyltransferase 2 (576 aa).

The Cytoplasmic segment spans residues 1–4; sequence MNIS. A helical; Signal-anchor for type II membrane protein membrane pass occupies residues 5-25; it reads AVFNALLVSIMAAVLWKHVKL. Residues 26–576 lie on the Lumenal side of the membrane; that stretch reads LEQFYVIEEE…PFAEVLVCNT (551 aa). N-linked (GlcNAc...) asparagine glycans are attached at residues asparagine 98, asparagine 275, asparagine 335, asparagine 451, asparagine 539, and asparagine 561. Residues 482-576 enclose the Fibronectin type-III domain; that stretch reads RESKCQASAQ…PFAEVLVCNT (95 aa).

The protein belongs to the glycosyltransferase 61 family.

It is found in the endoplasmic reticulum membrane. The enzyme catalyses 3-O-(alpha-D-mannosyl)-L-threonyl-[protein] + UDP-N-acetyl-alpha-D-glucosamine = 3-O-(N-acetyl-beta-D-glucosaminyl-(1-&gt;4)-alpha-D-mannosyl)-L-threonyl-[protein] + UDP + H(+). The protein operates within protein modification; protein glycosylation. In terms of biological role, O-linked mannose beta-1,4-N-acetylglucosaminyltransferase that transfers UDP-N-acetyl-D-glucosamine to the 4-position of the mannose to generate N-acetyl-D-glucosamine-beta-1,4-O-D-mannosylprotein. Involved in the biosynthesis of the phosphorylated O-mannosyl trisaccharide (N-acetylgalactosamine-beta-3-N-acetylglucosamine-beta-4-(phosphate-6-)mannose), a carbohydrate structure present in alpha-dystroglycan (DAG1), which is required for binding laminin G-like domain-containing extracellular proteins with high affinity. The polypeptide is Protein O-linked-mannose beta-1,4-N-acetylglucosaminyltransferase 2 (pomgnt2) (Xenopus tropicalis (Western clawed frog)).